Here is a 346-residue protein sequence, read N- to C-terminus: Anthranilate phosphoribosyltransferase (346 aa).

Residues glycine 81, 84-85, 91-94, 109-117, and serine 121 contribute to the 5-phospho-alpha-D-ribose 1-diphosphate site; these read GD, NVST, and KHGGRSVSS. Glycine 81 is an anthranilate binding site. Residue serine 93 participates in Mg(2+) binding. An anthranilate-binding site is contributed by arginine 167. 2 residues coordinate Mg(2+): aspartate 226 and glutamate 227.

The protein belongs to the anthranilate phosphoribosyltransferase family. As to quaternary structure, homodimer. The cofactor is Mg(2+).

The catalysed reaction is N-(5-phospho-beta-D-ribosyl)anthranilate + diphosphate = 5-phospho-alpha-D-ribose 1-diphosphate + anthranilate. It functions in the pathway amino-acid biosynthesis; L-tryptophan biosynthesis; L-tryptophan from chorismate: step 2/5. In terms of biological role, catalyzes the transfer of the phosphoribosyl group of 5-phosphorylribose-1-pyrophosphate (PRPP) to anthranilate to yield N-(5'-phosphoribosyl)-anthranilate (PRA). This Marinomonas sp. (strain MWYL1) protein is Anthranilate phosphoribosyltransferase.